The chain runs to 194 residues: MSPITILLIGIAMSTDAFAAAIGKGAAIGKPRLRDALYVAVIFGVIETATPIAGWLLGQIASHYIAAFDHWIAFGLLSGLGIHMIINGLKNNGNTCKDNADTHNRNSRWLTLAATALATSIDAAAIGISLAFLDIHIGIVAAVIGLCTFTMVIFGVMLGRVLGTFVGNRAEIVGGIILIIVGSTILYEHLSNTG.

The next 6 helical transmembrane spans lie at 3–23 (PITI…AAIG), 37–57 (LYVA…GWLL), 65–85 (IAAF…IHMI), 112–132 (LAAT…SLAF), 137–157 (IGIV…FGVM), and 170–190 (AEIV…YEHL).

Belongs to the MntP (TC 9.B.29) family.

The protein localises to the cell inner membrane. Functionally, probably functions as a manganese efflux pump. This Xylella fastidiosa (strain M12) protein is Putative manganese efflux pump MntP.